Here is a 460-residue protein sequence, read N- to C-terminus: MLDIVIMAAGKGTRMKSSRPKVLHTLAGRALLQHVLATAAGLGAQRLITITGHGAEQVEAAMRSAFPAAPLAFVRQEPQLGTGHAVQQAVPLLDDAGTTLILNGDTPLIEASTARALVDACDGTRLALLTIDLADPTGYGRILRDGDGRGEKLLGIVEHKDASAEQRAVREVYTGMMAAPTALLKRWLACLSNDNAQREYYLTDVVAMAVADGVAVVAAQPASETEVLGVNSPLQLADLERRLQRKQAEALLEAGVRLADPARFDLRGTLGCGSDVEIDVNCVFEGRVELGDGVRIGAHCVIRDARIAAGAVIHPFTHIDGAEVGAGALVGPFARLRPGAELGAEVHIGNFVEVKNSTLARGAKANHLAYLGDATVGERVNYGAGSITANYDGANKHRTVIGDDVHVGSNCVLVAPVTLGAGATIGGGSTISKDVPAGQLGVARARQTVIAGWQRPQKKR.

Residues 1-233 (MLDIVIMAAG…ETEVLGVNSP (233 aa)) form a pyrophosphorylase region. Residues lysine 21, glutamine 76, and 81–82 (GT) contribute to the UDP-N-acetyl-alpha-D-glucosamine site. A Mg(2+)-binding site is contributed by aspartate 105. Residues glycine 140, glutamate 158, and asparagine 231 each coordinate UDP-N-acetyl-alpha-D-glucosamine. Position 231 (asparagine 231) interacts with Mg(2+). Residues 234 to 254 (LQLADLERRLQRKQAEALLEA) form a linker region. Positions 255 to 460 (GVRLADPARF…AGWQRPQKKR (206 aa)) are N-acetyltransferase. 2 residues coordinate UDP-N-acetyl-alpha-D-glucosamine: arginine 337 and lysine 355. Catalysis depends on histidine 367, which acts as the Proton acceptor. The UDP-N-acetyl-alpha-D-glucosamine site is built by tyrosine 370 and asparagine 381. Acetyl-CoA-binding positions include alanine 384, 390-391 (NY), serine 409, glycine 427, and arginine 444.

It in the N-terminal section; belongs to the N-acetylglucosamine-1-phosphate uridyltransferase family. This sequence in the C-terminal section; belongs to the transferase hexapeptide repeat family. As to quaternary structure, homotrimer. Requires Mg(2+) as cofactor.

The protein resides in the cytoplasm. The enzyme catalyses alpha-D-glucosamine 1-phosphate + acetyl-CoA = N-acetyl-alpha-D-glucosamine 1-phosphate + CoA + H(+). It carries out the reaction N-acetyl-alpha-D-glucosamine 1-phosphate + UTP + H(+) = UDP-N-acetyl-alpha-D-glucosamine + diphosphate. It participates in nucleotide-sugar biosynthesis; UDP-N-acetyl-alpha-D-glucosamine biosynthesis; N-acetyl-alpha-D-glucosamine 1-phosphate from alpha-D-glucosamine 6-phosphate (route II): step 2/2. It functions in the pathway nucleotide-sugar biosynthesis; UDP-N-acetyl-alpha-D-glucosamine biosynthesis; UDP-N-acetyl-alpha-D-glucosamine from N-acetyl-alpha-D-glucosamine 1-phosphate: step 1/1. The protein operates within bacterial outer membrane biogenesis; LPS lipid A biosynthesis. Its function is as follows. Catalyzes the last two sequential reactions in the de novo biosynthetic pathway for UDP-N-acetylglucosamine (UDP-GlcNAc). The C-terminal domain catalyzes the transfer of acetyl group from acetyl coenzyme A to glucosamine-1-phosphate (GlcN-1-P) to produce N-acetylglucosamine-1-phosphate (GlcNAc-1-P), which is converted into UDP-GlcNAc by the transfer of uridine 5-monophosphate (from uridine 5-triphosphate), a reaction catalyzed by the N-terminal domain. The polypeptide is Bifunctional protein GlmU (Methylibium petroleiphilum (strain ATCC BAA-1232 / LMG 22953 / PM1)).